A 564-amino-acid chain; its full sequence is Probable diguanylate cyclase DgcQ (564 aa).

Transmembrane regions (helical) follow at residues 20 to 40 (LGPG…STLL) and 360 to 380 (IALT…WYVI). The 136-residue stretch at 428–563 (HPFSVIQVDL…GRNRVFASDN (136 aa)) folds into the GGDEF domain. Aspartate 436 is a binding site for Mg(2+). Asparagine 444, histidine 449, and aspartate 453 together coordinate substrate. Glutamate 479 contacts Mg(2+). Glutamate 479 serves as the catalytic Proton acceptor.

As to quaternary structure, homodimer. It depends on Mg(2+) as a cofactor.

It is found in the cell inner membrane. It carries out the reaction 2 GTP = 3',3'-c-di-GMP + 2 diphosphate. It functions in the pathway glycan metabolism; bacterial cellulose biosynthesis. It participates in purine metabolism; 3',5'-cyclic di-GMP biosynthesis. In terms of biological role, catalyzes the synthesis of cyclic-di-GMP (c-di-GMP) via the condensation of 2 GTP molecules. Cyclic-di-GMP is a second messenger which controls cell surface-associated traits in bacteria. Involved in the regulation of cellulose production. This chain is Probable diguanylate cyclase DgcQ, found in Escherichia coli (strain K12).